A 1537-amino-acid polypeptide reads, in one-letter code: Histone-lysine N-methyltransferase, H3 lysine-79 specific (1537 aa).

In terms of domain architecture, DOT1 spans 16–330 (EPAVYPWPLP…ILENYFSSLK (315 aa)). S-adenosyl-L-methionine is bound by residues 136-139 (YGET), 159-168 (FVDLGSGVGQ), Glu186, and 222-223 (DF). Ser297 carries the phosphoserine modification. The segment covering 334–350 (LREEQEAARRRQQRESK) has biased composition (basic and acidic residues). Residues 334–467 (LREEQEAARR…SPFYQLPPSV (134 aa)) form a disordered region. Ser374 is modified (phosphoserine). A required for interaction with nucleosomes and DNA region spans residues 391–416 (PSKARKKKLNKKGRKMAGRKRGRPKK). A compositionally biased stretch (basic residues) spans 393-416 (KARKKKLNKKGRKMAGRKRGRPKK). Over residues 439–450 (QTVSQTAASSPQ) the composition is skewed to polar residues. Residues Ser448 and Ser471 each carry the phosphoserine modification. Thr480 is subject to Phosphothreonine. Ser775 and Ser786 each carry phosphoserine. Disordered stretches follow at residues 785 to 853 (LSQD…LRER), 893 to 912 (RAERARSTPSPVLQPRDPSS), 957 to 1128 (TPGA…LNLN), and 1145 to 1243 (SPET…KWKS). Positions 800-809 (LHSRAEHTKE) are enriched in basic and acidic residues. Ser826 is subject to Phosphoserine. At Ser834 the chain carries Phosphoserine; by MAPK11. The segment covering 844–853 (KSSEKGLRER) has biased composition (basic and acidic residues). Composition is skewed to polar residues over residues 899 to 912 (STPSPVLQPRDPSS), 966 to 986 (DESSSSGSLFATVGSRSSTPQ), and 994 to 1010 (PRNSLPASPAHQLSSSP). Thr900 bears the Phosphothreonine; by MAPK11 mark. Ser902 carries the post-translational modification Phosphoserine; by MAPK11. Thr984 carries the post-translational modification Phosphothreonine; by MAPK11. Position 997 is a phosphoserine (Ser997). 2 positions are modified to phosphoserine; by MAPK11: Ser1001 and Ser1009. Residue Ser1035 is modified to Phosphoserine. The span at 1048–1068 (TITTGAGSAKQSPSSKHSPLT) shows a compositional bias: polar residues. A Phosphoserine modification is found at Ser1093. Ser1104 bears the Phosphoserine; by MAPK11 mark. Positions 1118-1128 (TQPSGSPLNLN) are enriched in polar residues. Residues 1158–1171 (QDHDQPPVLKKERP) are compositionally biased toward basic and acidic residues. Residues 1172-1184 (LSQTNGAHYSPLT) are compositionally biased toward polar residues. Acidic residues predominate over residues 1185 to 1195 (SDEEPGSEDEP). 2 positions are modified to phosphoserine: Ser1213 and Ser1246. Positions 1334–1410 (GASLPHKGPE…DKTPLLSGKA (77 aa)) are disordered.

This sequence belongs to the class I-like SAM-binding methyltransferase superfamily. DOT1 family. As to quaternary structure, interacts with MLLT10.

It localises to the nucleus. It carries out the reaction L-lysyl(79)-[histone H3] + 3 S-adenosyl-L-methionine = N(6),N(6),N(6)-trimethyl-L-lysyl(79)-[histone H3] + 3 S-adenosyl-L-homocysteine + 3 H(+). Functionally, histone methyltransferase. Methylates 'Lys-79' of histone H3. Nucleosomes are preferred as substrate compared to free histones. Binds to DNA. The polypeptide is Histone-lysine N-methyltransferase, H3 lysine-79 specific (Homo sapiens (Human)).